Here is a 290-residue protein sequence, read N- to C-terminus: Inner membrane protein YebZ (290 aa).

Residues 1–10 (MLAFTWIALR) are Periplasmic-facing. A helical transmembrane segment spans residues 11-31 (FIHFTSLMLVFGFAMYGAWLA). Residues 32-49 (PLTIRRLLAKRFLRLQQH) lie on the Cytoplasmic side of the membrane. Residues 50 to 70 (AAVWSLISATAMLAVQGGLMG) traverse the membrane as a helical segment. At 71–89 (TGWTDVFSPNIWQAVLQTQ) the chain is on the periplasmic side. A helical transmembrane segment spans residues 90–110 (FGGIWLWQIVLALVTLIVALM). At 111-117 (QPRNMPR) the chain is on the cytoplasmic side. Residues 118-138 (LLFMLTTAQFILLAGVGHATL) traverse the membrane as a helical segment. Residues 139 to 151 (NEGVTAKIHQTNH) are Periplasmic-facing. A helical membrane pass occupies residues 152–172 (AIHLICAAAWFGGLLPVLWCM). At 173-195 (QLIKGRWRHQAIQALMRFSWCGH) the chain is on the cytoplasmic side. The chain crosses the membrane as a helical span at residues 196-216 (FAVIGVLASGVLNALLITGFP). At 217–222 (PTLTTY) the chain is on the periplasmic side. The chain crosses the membrane as a helical span at residues 223–243 (WGQLLLLKAILVMIMVVIALA). Residues 244 to 260 (NRYVLVPRMRQDEDRAA) lie on the Cytoplasmic side of the membrane. A helical transmembrane segment spans residues 261–281 (PWFVWMTKLEWAIGAVVLVII). Over 282 to 290 (SLLATLEPF) the chain is Periplasmic.

The protein belongs to the CopD family.

The protein localises to the cell inner membrane. The polypeptide is Inner membrane protein YebZ (yebZ) (Escherichia coli (strain K12)).